A 346-amino-acid polypeptide reads, in one-letter code: 3-dehydroquinate synthase (346 aa).

Residues D62–K67, G96–D100, T120–T121, K133, K142, and F160–T163 contribute to the NAD(+) site. Zn(2+)-binding residues include E175, H234, and H251.

The protein belongs to the sugar phosphate cyclases superfamily. Dehydroquinate synthase family. The cofactor is Co(2+). Requires Zn(2+) as cofactor. It depends on NAD(+) as a cofactor.

It is found in the cytoplasm. The catalysed reaction is 7-phospho-2-dehydro-3-deoxy-D-arabino-heptonate = 3-dehydroquinate + phosphate. The protein operates within metabolic intermediate biosynthesis; chorismate biosynthesis; chorismate from D-erythrose 4-phosphate and phosphoenolpyruvate: step 2/7. Catalyzes the conversion of 3-deoxy-D-arabino-heptulosonate 7-phosphate (DAHP) to dehydroquinate (DHQ). The polypeptide is 3-dehydroquinate synthase (Campylobacter curvus (strain 525.92)).